Here is a 1503-residue protein sequence, read N- to C-terminus: Chromosome partition protein MukB (1503 aa).

Over residues 1–19 the composition is skewed to polar residues; it reads MMNTNELFDQTAVNSSQDK. The tract at residues 1 to 21 is disordered; the sequence is MMNTNELFDQTAVNSSQDKPL. Residue 65–72 participates in ATP binding; that stretch reads GGNGAGKS. Coiled coils occupy residues 370 to 495, 536 to 616, 662 to 697, 865 to 1173, and 1238 to 1293; these read MNAL…QRLS, DQKM…HRQQ, MQEMLRKEREATLERDELARTEAALASQISQLSQAD, EMLM…SAEE, and DAIE…LQNI. Residues 696–813 are flexible hinge; that stretch reads ADGAEDIRLN…EVPLFGRAAR (118 aa).

Belongs to the SMC family. MukB subfamily. As to quaternary structure, homodimerization via its hinge domain. Binds to DNA via its C-terminal region. Interacts, and probably forms a ternary complex, with MukE and MukF via its C-terminal region. The complex formation is stimulated by calcium or magnesium. Interacts with tubulin-related protein FtsZ.

It localises to the cytoplasm. It is found in the nucleoid. Plays a central role in chromosome condensation, segregation and cell cycle progression. Functions as a homodimer, which is essential for chromosome partition. Involved in negative DNA supercoiling in vivo, and by this means organize and compact chromosomes. May achieve or facilitate chromosome segregation by condensation DNA from both sides of a centrally located replisome during cell division. This Haemophilus ducreyi (strain 35000HP / ATCC 700724) protein is Chromosome partition protein MukB.